We begin with the raw amino-acid sequence, 528 residues long: RNA polymerase sigma factor SigA (528 aa).

A compositionally biased stretch (polar residues) spans 1–10 (MAATKASTAT). The interval 1–211 (MAATKASTAT…FVWDEDESEA (211 aa)) is disordered. Composition is skewed to low complexity over residues 19–31 (TKSPAASASGAKT), 38–56 (AKSASGSPPAKRATKPAAR), and 80–92 (AAKSAAAKAPSAR). The span at 100 to 109 (APKDAQHEAA) shows a compositional bias: basic and acidic residues. Residues 110-173 (TDPEDALDSV…DDEDHEDLEA (64 aa)) show a composition bias toward acidic residues. The interval 295-365 (LLEANLRLVV…TRAMADQART (71 aa)) is sigma-70 factor domain-2. The short motif at 319–322 (DLIQ) is the Interaction with polymerase core subunit RpoC element. The tract at residues 374–450 (EVINKLGRIQ…DSEAVVAVDA (77 aa)) is sigma-70 factor domain-3. Residues 463 to 516 (VLDTLSEREAGVVRLRFGLTDGQPRTLDEIGQVYGVTRERIRQIESKTMSKLRH) are sigma-70 factor domain-4. The H-T-H motif DNA-binding region spans 489–508 (LDEIGQVYGVTRERIRQIES).

It belongs to the sigma-70 factor family. RpoD/SigA subfamily. In terms of assembly, interacts transiently with the RNA polymerase catalytic core.

It is found in the cytoplasm. In terms of biological role, sigma factors are initiation factors that promote the attachment of RNA polymerase to specific initiation sites and are then released. This sigma factor is the primary sigma factor during exponential growth. This is RNA polymerase sigma factor SigA from Mycobacterium bovis (strain ATCC BAA-935 / AF2122/97).